Consider the following 550-residue polypeptide: Pectinesterase 2.2 (550 aa).

N-linked (GlcNAc...) asparagine glycosylation is present at asparagine 179. Substrate-binding residues include threonine 312 and glutamine 342. An intrachain disulfide couples cysteine 331 to cysteine 358. Catalysis depends on aspartate 365, which acts as the Proton donor. Catalysis depends on aspartate 386, which acts as the Nucleophile. Residues cysteine 399 and cysteine 433 are joined by a disulfide bond. Substrate contacts are provided by arginine 454 and tryptophan 456.

This sequence in the N-terminal section; belongs to the PMEI family. The protein in the C-terminal section; belongs to the pectinesterase family.

The protein resides in the secreted. It localises to the cell wall. It catalyses the reaction [(1-&gt;4)-alpha-D-galacturonosyl methyl ester](n) + n H2O = [(1-&gt;4)-alpha-D-galacturonosyl](n) + n methanol + n H(+). Its pathway is glycan metabolism; pectin degradation; 2-dehydro-3-deoxy-D-gluconate from pectin: step 1/5. Pectinesterase may play a role in cell wall metabolism during fruit growth and development prior to ripening and may be required for preparing cell walls for softening by polygalacturonase during fruit ripening. The polypeptide is Pectinesterase 2.2 (PME2.2) (Solanum lycopersicum (Tomato)).